A 138-amino-acid chain; its full sequence is Nucleoside diphosphate kinase (138 aa).

6 residues coordinate ATP: Lys-9, Phe-57, Arg-85, Thr-91, Arg-102, and Asn-112. Catalysis depends on His-115, which acts as the Pros-phosphohistidine intermediate.

This sequence belongs to the NDK family. In terms of assembly, homotetramer. It depends on Mg(2+) as a cofactor.

The protein resides in the cytoplasm. The enzyme catalyses a 2'-deoxyribonucleoside 5'-diphosphate + ATP = a 2'-deoxyribonucleoside 5'-triphosphate + ADP. It catalyses the reaction a ribonucleoside 5'-diphosphate + ATP = a ribonucleoside 5'-triphosphate + ADP. Major role in the synthesis of nucleoside triphosphates other than ATP. The ATP gamma phosphate is transferred to the NDP beta phosphate via a ping-pong mechanism, using a phosphorylated active-site intermediate. The chain is Nucleoside diphosphate kinase from Desulforapulum autotrophicum (strain ATCC 43914 / DSM 3382 / VKM B-1955 / HRM2) (Desulfobacterium autotrophicum).